The following is a 404-amino-acid chain: 4-hydroxy-3-methylbut-2-en-1-yl diphosphate synthase (ferredoxin) (404 aa).

Positions 313, 316, 347, and 354 each coordinate [4Fe-4S] cluster.

This sequence belongs to the IspG family. [4Fe-4S] cluster is required as a cofactor.

The catalysed reaction is (2E)-4-hydroxy-3-methylbut-2-enyl diphosphate + 2 oxidized [2Fe-2S]-[ferredoxin] + H2O = 2-C-methyl-D-erythritol 2,4-cyclic diphosphate + 2 reduced [2Fe-2S]-[ferredoxin] + H(+). The protein operates within isoprenoid biosynthesis; isopentenyl diphosphate biosynthesis via DXP pathway; isopentenyl diphosphate from 1-deoxy-D-xylulose 5-phosphate: step 5/6. Functionally, converts 2C-methyl-D-erythritol 2,4-cyclodiphosphate (ME-2,4cPP) into 1-hydroxy-2-methyl-2-(E)-butenyl 4-diphosphate. This Crocosphaera subtropica (strain ATCC 51142 / BH68) (Cyanothece sp. (strain ATCC 51142)) protein is 4-hydroxy-3-methylbut-2-en-1-yl diphosphate synthase (ferredoxin).